The primary structure comprises 425 residues: MAPERRSRLSETAGLFVSLLALTSIVPVQAVATVPQTDYAKRAERVLRSAPLIDGHNDLPYAIRKSTRDQIYDGKLPFETSLKGHTDLPRMRKGRMGGQFWSVFIACPSDPNAPIDLPTFATRDTLEQIDVARRLVDKYSKDLMFCDNPGCAKRAFRQGKIGSFLGIEGGHQVGSSIAALRQAFYAGARYMTITHNCDNAWATAASTVRAGKPDLGMTDFGPALIKEMNRLGMLVDLSHVSHQSMRDILKVTKAPVIFSHSSAYEVSKHLRNVPDDVLKTVAKNNGVVMVTFVRTFVNVDDPDSVDVNTIVKHIFHIAKVAGWDHVGLGGDYDGTTELPKGLEDVSKYPYLIEKVLEAGATEEQARKLVGENVLRVWTEVEQIAKKIQRSGALPVEEVWKGRNGTALSERSTFIEGPAPLAYGCD.

An N-terminal signal peptide occupies residues 1–31 (MAPERRSRLSETAGLFVSLLALTSIVPVQAV). Residues His-56, Asp-58, and Glu-168 each coordinate Zn(2+). Cys-107 and Cys-197 are disulfide-bonded. His-195 is a substrate binding site. Positions 239 and 260 each coordinate Zn(2+). Residues Arg-271 and Asp-331 each coordinate substrate. An N-linked (GlcNAc...) asparagine glycan is attached at Asn-403.

The protein belongs to the metallo-dependent hydrolases superfamily. Peptidase M19 family. It depends on Zn(2+) as a cofactor.

The enzyme catalyses an L-aminoacyl-L-amino acid + H2O = 2 an L-alpha-amino acid. Its function is as follows. Hydrolyzes a wide range of dipeptides. This is Putative dipeptidase MGYG_00085 from Arthroderma gypseum (strain ATCC MYA-4604 / CBS 118893) (Microsporum gypseum).